The chain runs to 393 residues: S-adenosylmethionine synthase (393 aa).

Residue H16 coordinates ATP. A Mg(2+)-binding site is contributed by D18. Residue E44 participates in K(+) binding. Positions 57 and 100 each coordinate L-methionine. A flexible loop region spans residues 100-110 (QSNDIAQGVDH). ATP-binding positions include 167–169 (DAK), 238–239 (RF), D247, 253–254 (RK), A270, and K274. D247 contributes to the L-methionine binding site. K278 is an L-methionine binding site.

The protein belongs to the AdoMet synthase family. Homotetramer; dimer of dimers. Mg(2+) serves as cofactor. The cofactor is K(+).

The protein resides in the cytoplasm. It carries out the reaction L-methionine + ATP + H2O = S-adenosyl-L-methionine + phosphate + diphosphate. The protein operates within amino-acid biosynthesis; S-adenosyl-L-methionine biosynthesis; S-adenosyl-L-methionine from L-methionine: step 1/1. In terms of biological role, catalyzes the formation of S-adenosylmethionine (AdoMet) from methionine and ATP. The overall synthetic reaction is composed of two sequential steps, AdoMet formation and the subsequent tripolyphosphate hydrolysis which occurs prior to release of AdoMet from the enzyme. In Acidovorax sp. (strain JS42), this protein is S-adenosylmethionine synthase.